Here is a 146-residue protein sequence, read N- to C-terminus: Anti-sigma F factor (146 aa).

This sequence belongs to the anti-sigma-factor family.

It carries out the reaction L-seryl-[protein] + ATP = O-phospho-L-seryl-[protein] + ADP + H(+). The catalysed reaction is L-threonyl-[protein] + ATP = O-phospho-L-threonyl-[protein] + ADP + H(+). Binds to sigma F and blocks its ability to form an RNA polymerase holoenzyme (E-sigma F). Phosphorylates SpoIIAA on a serine residue. This phosphorylation may enable SpoIIAA to act as an anti-anti-sigma factor that counteracts SpoIIAB and thus releases sigma F from inhibition. In Bacillus cereus (strain G9842), this protein is Anti-sigma F factor.